The sequence spans 215 residues: Ribosomal RNA small subunit methyltransferase G (215 aa).

S-adenosyl-L-methionine contacts are provided by residues Gly77, Phe82, 130-131 (IE), and Arg146.

The protein belongs to the methyltransferase superfamily. RNA methyltransferase RsmG family.

The protein resides in the cytoplasm. The enzyme catalyses guanosine(527) in 16S rRNA + S-adenosyl-L-methionine = N(7)-methylguanosine(527) in 16S rRNA + S-adenosyl-L-homocysteine. In terms of biological role, specifically methylates the N7 position of guanine in position 527 of 16S rRNA. This chain is Ribosomal RNA small subunit methyltransferase G, found in Bartonella henselae (strain ATCC 49882 / DSM 28221 / CCUG 30454 / Houston 1) (Rochalimaea henselae).